Here is a 443-residue protein sequence, read N- to C-terminus: Chromosomal replication initiator protein DnaA (443 aa).

The interval 1–80 is domain I, interacts with DnaA modulators; the sequence is MFLEEKLNLV…ETCGDKIPVE (80 aa). The domain II stretch occupies residues 80-104; it reads EILIETKAASPLQSILEKSFDQKDF. Residues 105–321 are domain III, AAA+ region; the sequence is QFNPDYTFET…GALNDIYLYK (217 aa). Gly-148, Gly-150, Lys-151, and Thr-152 together coordinate ATP. A domain IV, binds dsDNA region spans residues 322–443; the sequence is KSYSLLFLNL…ERISSKYKLQ (122 aa).

Belongs to the DnaA family. In terms of assembly, oligomerizes as a right-handed, spiral filament on DNA at oriC.

The protein localises to the cytoplasm. Its function is as follows. Plays an essential role in the initiation and regulation of chromosomal replication. ATP-DnaA binds to the origin of replication (oriC) to initiate formation of the DNA replication initiation complex once per cell cycle. Binds the DnaA box (a 9 base pair repeat at the origin) and separates the double-stranded (ds)DNA. Forms a right-handed helical filament on oriC DNA; dsDNA binds to the exterior of the filament while single-stranded (ss)DNA is stabiized in the filament's interior. The ATP-DnaA-oriC complex binds and stabilizes one strand of the AT-rich DNA unwinding element (DUE), permitting loading of DNA polymerase. After initiation quickly degrades to an ADP-DnaA complex that is not apt for DNA replication. Binds acidic phospholipids. The polypeptide is Chromosomal replication initiator protein DnaA (Leptospira interrogans serogroup Icterohaemorrhagiae serovar copenhageni (strain Fiocruz L1-130)).